Reading from the N-terminus, the 430-residue chain is 4-hydroxy-3-methylbut-2-en-1-yl diphosphate synthase (flavodoxin) (430 aa).

4 residues coordinate [4Fe-4S] cluster: Cys-310, Cys-313, Cys-356, and Glu-363.

This sequence belongs to the IspG family. [4Fe-4S] cluster serves as cofactor.

It catalyses the reaction (2E)-4-hydroxy-3-methylbut-2-enyl diphosphate + oxidized [flavodoxin] + H2O + 2 H(+) = 2-C-methyl-D-erythritol 2,4-cyclic diphosphate + reduced [flavodoxin]. Its pathway is isoprenoid biosynthesis; isopentenyl diphosphate biosynthesis via DXP pathway; isopentenyl diphosphate from 1-deoxy-D-xylulose 5-phosphate: step 5/6. Converts 2C-methyl-D-erythritol 2,4-cyclodiphosphate (ME-2,4cPP) into 1-hydroxy-2-methyl-2-(E)-butenyl 4-diphosphate. The sequence is that of 4-hydroxy-3-methylbut-2-en-1-yl diphosphate synthase (flavodoxin) from Nitrobacter winogradskyi (strain ATCC 25391 / DSM 10237 / CIP 104748 / NCIMB 11846 / Nb-255).